The following is a 493-amino-acid chain: Transcript termination protein A18 (493 aa).

Residues 100–256 (MIELKRPLYI…NSIINIAKLS (157 aa)) enclose the Helicase ATP-binding domain. Position 113-120 (113-120 (LACGFGKT)) interacts with ATP. Residues 206–209 (DESH) carry the DESH box motif.

The protein belongs to the helicase family. Poxviruses subfamily. In terms of assembly, interacts with G2. Might be part of a transcription complex composed at least of G2, A18, and H5.

The protein localises to the virion. In terms of biological role, DNA helicase which seems to act as a postreplicative transcription termination factor. Involved in ATP-dependent release of nascent RNA. Forms a stable complex with single-stranded DNA, and to a lesser extent RNA. This chain is Transcript termination protein A18, found in Camelus.